The primary structure comprises 453 residues: tRNA modification GTPase MnmE (453 aa).

Arginine 22, glutamate 79, and lysine 119 together coordinate (6S)-5-formyl-5,6,7,8-tetrahydrofolate. One can recognise a TrmE-type G domain in the interval 215–376 (GMKVVIAGRP…LKQHLKSLMG (162 aa)). Asparagine 225 serves as a coordination point for K(+). GTP-binding positions include 225–230 (NAGKSS), 244–250 (TEIAGTT), 269–272 (DTAG), and 334–337 (NKAD). Position 229 (serine 229) interacts with Mg(2+). K(+)-binding residues include threonine 244, isoleucine 246, and threonine 249. Threonine 250 contacts Mg(2+). A (6S)-5-formyl-5,6,7,8-tetrahydrofolate-binding site is contributed by lysine 453.

This sequence belongs to the TRAFAC class TrmE-Era-EngA-EngB-Septin-like GTPase superfamily. TrmE GTPase family. Homodimer. Heterotetramer of two MnmE and two MnmG subunits. The cofactor is K(+).

The protein resides in the cytoplasm. Exhibits a very high intrinsic GTPase hydrolysis rate. Involved in the addition of a carboxymethylaminomethyl (cmnm) group at the wobble position (U34) of certain tRNAs, forming tRNA-cmnm(5)s(2)U34. The protein is tRNA modification GTPase MnmE of Shewanella baltica (strain OS195).